The primary structure comprises 601 residues: UBA domain-containing protein 3 (601 aa).

The Arf-GAP domain occupies 7 to 129 (ETAIRELVQS…LFLDENHSTN (123 aa)). Disordered stretches follow at residues 123–158 (DENH…KSRY) and 289–310 (EPNQ…SSMG). Residues 139–156 (TKSSSQSSPMASTSTSKS) show a composition bias toward low complexity. The 41-residue stretch at 157–197 (RYADSLSTLHDMGFSDDSVNTHALEETNGDVTRAIEKIVQH) folds into the UBA domain.

In Schizosaccharomyces pombe (strain 972 / ATCC 24843) (Fission yeast), this protein is UBA domain-containing protein 3 (ucp3).